Consider the following 520-residue polypeptide: GMP synthase [glutamine-hydrolyzing] (520 aa).

Positions 12–205 constitute a Glutamine amidotransferase type-1 domain; sequence KIIVLDYGSQ…AISICGGRGD (194 aa). Cys89 functions as the Nucleophile in the catalytic mechanism. Active-site residues include His179 and Glu181. The GMPS ATP-PPase domain maps to 206-395; that stretch reads WSMDNFIDMQ…LGMPDEVVWR (190 aa). ATP is bound at residue 233 to 239; it reads SGGVDSS.

As to quaternary structure, homodimer.

The enzyme catalyses XMP + L-glutamine + ATP + H2O = GMP + L-glutamate + AMP + diphosphate + 2 H(+). Its pathway is purine metabolism; GMP biosynthesis; GMP from XMP (L-Gln route): step 1/1. In terms of biological role, catalyzes the synthesis of GMP from XMP. This chain is GMP synthase [glutamine-hydrolyzing], found in Streptococcus equi subsp. equi (strain 4047).